The following is a 71-amino-acid chain: Protein bdm (71 aa).

The sequence is that of Protein bdm (bdm) from Escherichia coli (strain K12).